The primary structure comprises 513 residues: Cytochrome P450 4p1 (513 aa).

The heme site is built by Glu320 and Cys459.

The protein belongs to the cytochrome P450 family. It depends on heme as a cofactor.

Its subcellular location is the endoplasmic reticulum membrane. The protein resides in the microsome membrane. Functionally, may be involved in the metabolism of insect hormones and in the breakdown of synthetic insecticides. The protein is Cytochrome P450 4p1 (Cyp4p1) of Drosophila melanogaster (Fruit fly).